A 185-amino-acid chain; its full sequence is MSTPSKKRLIRDFKRLSTDPPGGISGAPCADNLMIWNAVIFGPADTPFEDGTFKLVLTFDESYPNKPPTVKFLSKMFHPNVYANGELCLDILQNRWSPTYDVAAILTSIQSLLHDPNPNSPANAEAASLYRENMKEYVRRVKATVEASWLDDGEMPESIEEDDEAEAEAEAEATVDRSAPQTASA.

Residues P4 to L150 form the UBC core domain. C88 functions as the Glycyl thioester intermediate in the catalytic mechanism. The segment covering W149–A173 has biased composition (acidic residues). The interval W149–A185 is disordered.

This sequence belongs to the ubiquitin-conjugating enzyme family.

Its subcellular location is the cytoplasm. It is found in the nucleus. It catalyses the reaction S-ubiquitinyl-[E1 ubiquitin-activating enzyme]-L-cysteine + [E2 ubiquitin-conjugating enzyme]-L-cysteine = [E1 ubiquitin-activating enzyme]-L-cysteine + S-ubiquitinyl-[E2 ubiquitin-conjugating enzyme]-L-cysteine.. It functions in the pathway protein modification; protein ubiquitination. Catalyzes the covalent attachment of ubiquitin to other proteins. Plays a role in transcription regulation by catalyzing the monoubiquitination of histone H2B to form H2BK123ub1. H2BK123ub1 gives a specific tag for epigenetic transcriptional activation and is also a prerequisite for H3K4me and H3K79me formation. Also involved in postreplication repair of UV-damaged DNA, in N-end rule-dependent protein degradation and in sporulation. The chain is Ubiquitin-conjugating enzyme E2 2 (UBC2) from Mycosarcoma maydis (Corn smut fungus).